Here is a 404-residue protein sequence, read N- to C-terminus: Imidazolonepropionase (404 aa).

Fe(3+) contacts are provided by histidine 73 and histidine 75. Zn(2+) is bound by residues histidine 73 and histidine 75. Arginine 82, tyrosine 145, and histidine 178 together coordinate 4-imidazolone-5-propanoate. Tyrosine 145 provides a ligand contact to N-formimidoyl-L-glutamate. Residue histidine 243 coordinates Fe(3+). Histidine 243 is a Zn(2+) binding site. Glutamine 246 contacts 4-imidazolone-5-propanoate. Aspartate 318 lines the Fe(3+) pocket. Aspartate 318 contacts Zn(2+). Positions 320 and 322 each coordinate N-formimidoyl-L-glutamate. Residue serine 323 participates in 4-imidazolone-5-propanoate binding.

Belongs to the metallo-dependent hydrolases superfamily. HutI family. Requires Zn(2+) as cofactor. Fe(3+) serves as cofactor.

Its subcellular location is the cytoplasm. It carries out the reaction 4-imidazolone-5-propanoate + H2O = N-formimidoyl-L-glutamate. It participates in amino-acid degradation; L-histidine degradation into L-glutamate; N-formimidoyl-L-glutamate from L-histidine: step 3/3. Catalyzes the hydrolytic cleavage of the carbon-nitrogen bond in imidazolone-5-propanoate to yield N-formimidoyl-L-glutamate. It is the third step in the universal histidine degradation pathway. This chain is Imidazolonepropionase, found in Bradyrhizobium sp. (strain BTAi1 / ATCC BAA-1182).